A 251-amino-acid polypeptide reads, in one-letter code: uncharacterized protein (251 aa).

A divalent metal cation-binding residues include His5, His7, Glu101, His132, His163, and Asp209.

This sequence belongs to the metallo-dependent hydrolases superfamily. TatD-type hydrolase family. Requires a divalent metal cation as cofactor.

This is an uncharacterized protein from Methanocaldococcus jannaschii (strain ATCC 43067 / DSM 2661 / JAL-1 / JCM 10045 / NBRC 100440) (Methanococcus jannaschii).